The chain runs to 95 residues: UPF0235 protein Sama_2480 (95 aa).

This sequence belongs to the UPF0235 family.

The protein is UPF0235 protein Sama_2480 of Shewanella amazonensis (strain ATCC BAA-1098 / SB2B).